The sequence spans 70 residues: UPF0352 protein Sfri_2492 (70 aa).

It belongs to the UPF0352 family.

The polypeptide is UPF0352 protein Sfri_2492 (Shewanella frigidimarina (strain NCIMB 400)).